We begin with the raw amino-acid sequence, 238 residues long: Large ribosomal subunit protein uL2 (238 aa).

The segment at 198–238 is disordered; it reads NHPHGGGSHQSPSFPTTVSRNAPPGRKVGHIAARSTGRRKR. Over residues 206–217 the composition is skewed to polar residues; that stretch reads HQSPSFPTTVSR.

It belongs to the universal ribosomal protein uL2 family. Part of the 50S ribosomal subunit. Forms a bridge to the 30S subunit in the 70S ribosome.

Its function is as follows. One of the primary rRNA binding proteins. Required for association of the 30S and 50S subunits to form the 70S ribosome, for tRNA binding and peptide bond formation. It has been suggested to have peptidyltransferase activity; this is somewhat controversial. Makes several contacts with the 16S rRNA in the 70S ribosome. The chain is Large ribosomal subunit protein uL2 from Hyperthermus butylicus (strain DSM 5456 / JCM 9403 / PLM1-5).